The following is a 60-amino-acid chain: UPF0434 protein HCH_02705 (60 aa).

This sequence belongs to the UPF0434 family.

This chain is UPF0434 protein HCH_02705, found in Hahella chejuensis (strain KCTC 2396).